The sequence spans 122 residues: Large ribosomal subunit protein uL14c (122 aa).

This sequence belongs to the universal ribosomal protein uL14 family. As to quaternary structure, part of the 50S ribosomal subunit.

It is found in the plastid. Its subcellular location is the chloroplast. Functionally, binds to 23S rRNA. This Pyropia yezoensis (Susabi-nori) protein is Large ribosomal subunit protein uL14c.